A 149-amino-acid chain; its full sequence is Large ribosomal subunit protein eL19 (149 aa).

The interval lysine 67–arginine 90 is disordered.

It belongs to the eukaryotic ribosomal protein eL19 family. In terms of assembly, part of the 50S ribosomal subunit.

Binds to the 23S rRNA. This is Large ribosomal subunit protein eL19 from Archaeoglobus fulgidus (strain ATCC 49558 / DSM 4304 / JCM 9628 / NBRC 100126 / VC-16).